A 307-amino-acid polypeptide reads, in one-letter code: MAMAEPQDPKKGDKKTAERRGGGWLSRIAPGVRGAFAKRETPENLWVKCPDTGEMIFRSDLEAALWVTPAGRHMRIGPEARFKFTFDDGQYEALPTPPVVEDPLKFSDGKPYKDRLVAARKATGEPDAMAIGYGKVGGVDAVVLVQDFAFMGGSLGMAAGEGFIAAAKAALERQVPMIAFTAAGGARMQEGALSLMQMARTTLAINELKDAALPYVVVLTDPTTGGVTASYAMLGDIHLAEPGALIGFAGPRVIEQTIRETLPPGFQRSEYLVEKGMVDRVTHRKELPEVLGSLLGTLMMGRKRQAA.

A disordered region spans residues 1-26; the sequence is MAMAEPQDPKKGDKKTAERRGGGWLS. Residues 7–21 are compositionally biased toward basic and acidic residues; sequence QDPKKGDKKTAERRG. Positions 45-307 constitute a CoA carboxyltransferase N-terminal domain; that stretch reads LWVKCPDTGE…LMMGRKRQAA (263 aa).

Belongs to the AccD/PCCB family. In terms of assembly, acetyl-CoA carboxylase is a heterohexamer composed of biotin carboxyl carrier protein (AccB), biotin carboxylase (AccC) and two subunits each of ACCase subunit alpha (AccA) and ACCase subunit beta (AccD).

The protein resides in the cytoplasm. It catalyses the reaction N(6)-carboxybiotinyl-L-lysyl-[protein] + acetyl-CoA = N(6)-biotinyl-L-lysyl-[protein] + malonyl-CoA. The protein operates within lipid metabolism; malonyl-CoA biosynthesis; malonyl-CoA from acetyl-CoA: step 1/1. In terms of biological role, component of the acetyl coenzyme A carboxylase (ACC) complex. Biotin carboxylase (BC) catalyzes the carboxylation of biotin on its carrier protein (BCCP) and then the CO(2) group is transferred by the transcarboxylase to acetyl-CoA to form malonyl-CoA. The polypeptide is Acetyl-coenzyme A carboxylase carboxyl transferase subunit beta (Caulobacter vibrioides (strain ATCC 19089 / CIP 103742 / CB 15) (Caulobacter crescentus)).